The sequence spans 146 residues: Large ribosomal subunit protein uL13 (146 aa).

The protein belongs to the universal ribosomal protein uL13 family. Part of the 50S ribosomal subunit.

In terms of biological role, this protein is one of the early assembly proteins of the 50S ribosomal subunit, although it is not seen to bind rRNA by itself. It is important during the early stages of 50S assembly. The sequence is that of Large ribosomal subunit protein uL13 from Mycoplasma genitalium (strain ATCC 33530 / DSM 19775 / NCTC 10195 / G37) (Mycoplasmoides genitalium).